We begin with the raw amino-acid sequence, 1947 residues long: DNA-directed RNA polymerase subunit beta' (1947 aa).

Zn(2+) is bound by residues Cys119, Cys121, Cys141, and Cys144. Mg(2+)-binding residues include Asp1778, Asp1780, and Asp1782.

It belongs to the RNA polymerase beta' chain family. RpoC1 subfamily. In plastids the minimal PEP RNA polymerase catalytic core is composed of four subunits: alpha, beta, beta', and beta''. When a (nuclear-encoded) sigma factor is associated with the core the holoenzyme is formed, which can initiate transcription. The cofactor is Mg(2+). Requires Zn(2+) as cofactor.

Its subcellular location is the plastid. It localises to the chloroplast. The catalysed reaction is RNA(n) + a ribonucleoside 5'-triphosphate = RNA(n+1) + diphosphate. Its function is as follows. DNA-dependent RNA polymerase catalyzes the transcription of DNA into RNA using the four ribonucleoside triphosphates as substrates. The sequence is that of DNA-directed RNA polymerase subunit beta' from Oedogonium cardiacum (Filamentous green alga).